Reading from the N-terminus, the 529-residue chain is VIN3-like protein 3 (529 aa).

Positions 97-104 (PKRQKRDL) match the Nuclear localization signal motif. The segment at 137 to 207 (RCSCCICFKY…CFNCVSCGKT (71 aa)) adopts a PHD-type zinc-finger fold. The short motif at 214-221 (LKKQLIIA) is the Nuclear localization signal element. The Fibronectin type-III domain occupies 312–411 (GSMKIRIESV…FIVSTKTLQD (100 aa)). The segment at 421-529 (MSNCNNANKM…AGVSLILLQD (109 aa)) is VIN3-Interacting Domain (VID).

Interacts with VIN3.

The protein resides in the nucleus. Functionally, involved in both the vernalization and photoperiod pathways by regulating gene expression. The sequence is that of VIN3-like protein 3 (VIL3) from Arabidopsis thaliana (Mouse-ear cress).